We begin with the raw amino-acid sequence, 70 residues long: MPKQLMEIKDFLIKARRKDAKSCKIKKNPDNTKFKLRCSRFLYTLVITDSEKAEKLKKSLPPGLQVKELK.

Belongs to the eukaryotic ribosomal protein eL38 family.

The polypeptide is Large ribosomal subunit protein eL38 (RPL38) (Artemia franciscana (Brine shrimp)).